Here is a 311-residue protein sequence, read N- to C-terminus: Ribosomal RNA small subunit methyltransferase H (311 aa).

Residues 32–34 (AGH), D52, F79, D100, and Q107 each bind S-adenosyl-L-methionine. The segment covering 289-298 (SKEELEENNR) has biased composition (basic and acidic residues). A disordered region spans residues 289 to 311 (SKEELEENNRARSAKLRIAEKRK). A compositionally biased stretch (basic residues) spans 300 to 311 (RSAKLRIAEKRK).

It belongs to the methyltransferase superfamily. RsmH family.

The protein resides in the cytoplasm. The catalysed reaction is cytidine(1402) in 16S rRNA + S-adenosyl-L-methionine = N(4)-methylcytidine(1402) in 16S rRNA + S-adenosyl-L-homocysteine + H(+). Functionally, specifically methylates the N4 position of cytidine in position 1402 (C1402) of 16S rRNA. In Bacillus velezensis (strain DSM 23117 / BGSC 10A6 / LMG 26770 / FZB42) (Bacillus amyloliquefaciens subsp. plantarum), this protein is Ribosomal RNA small subunit methyltransferase H.